Reading from the N-terminus, the 562-residue chain is MAILFKEVCDIFYKIESTTKRLEKMEYFIELIKMVENKKAPQDLKKICQIAVGRVFAEHENKELGIGPNILIDAIISTGINKKTIQNTINQTGDIGTALEQLGHNIKQTSLFQTPPTLEEVYTTLKKLSTIEGGQSQKKKIRHISSILIKSSPIEQRYLARLILEDMRIGMSIPTILGAFSKYYNQPKENLEKIYAVVNDIGLLAEKLAQRCDIYNDEELQLKIFRPIKPMLAQLIGSINDAIIEMGAPQFETKYDGARVQIHKKDNIVKIYSRKLEDITNSIPEIVEEVKNIEAQNLIIEGECVAMDKNGRPRPFQDILRRFRRKYNIDSIQSEINLKVYVFDILYYNNKSLIELPLIERRSILEKILTNKHNKLNISHKLTTDNEQKAREFYEWSLSIGHEGVMIKNPNAIYTPGSRVRTMYKFKPTLESLDVVITKAKMGMGKRKEWYGSFEIAVKDYENNLYTIGHVGSGLTEEELHNLTEQIKNITIEVINDEAIVEPKIVLEISYEEIQESDKYKCGYALRFPRVARIRTDKSIEDINSIEDIERIFDIQKGKGNL.

Glu252 is a binding site for ATP. Lys254 (N6-AMP-lysine intermediate) is an active-site residue. Residues Arg259, Arg274, Glu303, Phe343, Arg419, and Lys425 each coordinate ATP.

Belongs to the ATP-dependent DNA ligase family. It depends on Mg(2+) as a cofactor.

The enzyme catalyses ATP + (deoxyribonucleotide)n-3'-hydroxyl + 5'-phospho-(deoxyribonucleotide)m = (deoxyribonucleotide)n+m + AMP + diphosphate.. DNA ligase that seals nicks in double-stranded DNA during DNA replication, DNA recombination and DNA repair. This chain is DNA ligase, found in Methanococcus aeolicus (strain ATCC BAA-1280 / DSM 17508 / OCM 812 / Nankai-3).